We begin with the raw amino-acid sequence, 494 residues long: Alpha-amylase-related protein (494 aa).

An N-terminal signal peptide occupies residues 1–20 (MIKFALALTLCLAGASLSLA). Gln-21 is subject to Pyrrolidone carboxylic acid. The cysteines at positions 48 and 104 are disulfide-linked. Ca(2+) is bound by residues Asn-118, Gln-169, and Asp-178. The cysteines at positions 157 and 171 are disulfide-linked. Residue Arg-206 participates in chloride binding. Asp-208 serves as the catalytic Nucleophile. Residue His-212 participates in Ca(2+) binding. Glu-245 functions as the Proton donor in the catalytic mechanism. Residues Asn-308 and Arg-343 each contribute to the chloride site. 3 disulfide bridges follow: Cys-376/Cys-382, Cys-418/Cys-441, and Cys-448/Cys-460.

It belongs to the glycosyl hydrolase 13 family. Monomer. Requires Ca(2+) as cofactor. The cofactor is chloride.

It localises to the secreted. It carries out the reaction Endohydrolysis of (1-&gt;4)-alpha-D-glucosidic linkages in polysaccharides containing three or more (1-&gt;4)-alpha-linked D-glucose units.. The protein is Alpha-amylase-related protein (Amyrel) of Drosophila bocqueti (Fruit fly).